A 240-amino-acid chain; its full sequence is Large ribosomal subunit protein bL25 (240 aa).

2 disordered regions span residues M1–R20 and G204–K240. Positions G204 to G229 are enriched in low complexity. Residues G230–K240 show a composition bias toward basic and acidic residues.

Belongs to the bacterial ribosomal protein bL25 family. CTC subfamily. In terms of assembly, part of the 50S ribosomal subunit; part of the 5S rRNA/L5/L18/L25 subcomplex. Contacts the 5S rRNA. Binds to the 5S rRNA independently of L5 and L18.

In terms of biological role, this is one of the proteins that binds to the 5S RNA in the ribosome where it forms part of the central protuberance. This is Large ribosomal subunit protein bL25 from Anaeromyxobacter sp. (strain K).